The following is a 404-amino-acid chain: Probable tRNA sulfurtransferase (404 aa).

In terms of domain architecture, THUMP spans 60-165; the sequence is QPIVEALKLV…DEAAYISYEE (106 aa). ATP contacts are provided by residues 183–184, 208–209, arginine 265, glycine 287, and glutamine 296; these read ML and HF.

Belongs to the ThiI family.

It is found in the cytoplasm. It carries out the reaction [ThiI sulfur-carrier protein]-S-sulfanyl-L-cysteine + a uridine in tRNA + 2 reduced [2Fe-2S]-[ferredoxin] + ATP + H(+) = [ThiI sulfur-carrier protein]-L-cysteine + a 4-thiouridine in tRNA + 2 oxidized [2Fe-2S]-[ferredoxin] + AMP + diphosphate. The catalysed reaction is [ThiS sulfur-carrier protein]-C-terminal Gly-Gly-AMP + S-sulfanyl-L-cysteinyl-[cysteine desulfurase] + AH2 = [ThiS sulfur-carrier protein]-C-terminal-Gly-aminoethanethioate + L-cysteinyl-[cysteine desulfurase] + A + AMP + 2 H(+). It participates in cofactor biosynthesis; thiamine diphosphate biosynthesis. Functionally, catalyzes the ATP-dependent transfer of a sulfur to tRNA to produce 4-thiouridine in position 8 of tRNAs, which functions as a near-UV photosensor. Also catalyzes the transfer of sulfur to the sulfur carrier protein ThiS, forming ThiS-thiocarboxylate. This is a step in the synthesis of thiazole, in the thiamine biosynthesis pathway. The sulfur is donated as persulfide by IscS. The protein is Probable tRNA sulfurtransferase of Streptococcus pyogenes serotype M2 (strain MGAS10270).